A 223-amino-acid chain; its full sequence is TMF-regulated nuclear protein 1 (223 aa).

Disordered regions lie at residues 1–84 and 196–223; these read MPGC…GPAG and GRLR…SPQR. Residues 21–54 are compositionally biased toward pro residues; that stretch reads GSPPPPPREPLPSLQPPSPSPTSTPTPTKSPPLP. The span at 73-84 shows a compositional bias: gly residues; it reads ASGGSGGAGPAG.

In terms of assembly, interacts with TMF1; may regulate TRNP1 proteasomal degradation. Post-translationally, ubiquitinated, leading to its degradation by the proteasome. In terms of tissue distribution, expressed in brain and kidney (at protein level). Also detected in spleen and intestine.

Its subcellular location is the nucleus. In terms of biological role, DNA-binding factor that regulates the expression of a subset of genes and plays a key role in tangential, radial, and lateral expansion of the brain neocortex. Regulates neural stem cells proliferation and the production of intermediate neural progenitors and basal radial glial cells affecting the process of cerebral cortex gyrification. May control the proliferation rate of cells by regulating their progression through key cell-cycle transition points. This is TMF-regulated nuclear protein 1 (Trnp1) from Mus musculus (Mouse).